The primary structure comprises 213 residues: Phosphoribosyl-dephospho-CoA transferase (213 aa).

Catalysis depends on residues D135 and D137.

It belongs to the MdcG family.

It carries out the reaction apo-[malonate decarboxylase ACP] + 2'-(5''-triphospho-alpha-D-ribosyl)-3'-dephospho-CoA = holo-[malonate decarboxylase ACP] + diphosphate. Its function is as follows. Transfers 2'-(5-triphosphoribosyl)-3'-dephosphocoenzyme-A to the apo-[acyl-carrier-protein] of the malonate decarboxylase to yield holo-[acyl-carrier-protein]. This Xanthomonas euvesicatoria pv. vesicatoria (strain 85-10) (Xanthomonas campestris pv. vesicatoria) protein is Phosphoribosyl-dephospho-CoA transferase.